Reading from the N-terminus, the 263-residue chain is Trans-aconitate 2-methyltransferase (263 aa).

This sequence belongs to the methyltransferase superfamily. Tam family.

The protein resides in the cytoplasm. The catalysed reaction is trans-aconitate + S-adenosyl-L-methionine = (E)-3-(methoxycarbonyl)pent-2-enedioate + S-adenosyl-L-homocysteine. In terms of biological role, catalyzes the S-adenosylmethionine monomethyl esterification of trans-aconitate. This is Trans-aconitate 2-methyltransferase from Mycobacterium marinum (strain ATCC BAA-535 / M).